We begin with the raw amino-acid sequence, 239 residues long: Uridylate kinase (239 aa).

Residue 13-16 participates in ATP binding; that stretch reads KLSG. Gly-55 serves as a coordination point for UMP. 2 residues coordinate ATP: Gly-56 and Arg-60. Residues Asp-75 and 136-143 each bind UMP; that span reads TGNPFFTT. The ATP site is built by Thr-163, Tyr-169, and Asp-172.

The protein belongs to the UMP kinase family. Homohexamer.

It localises to the cytoplasm. It catalyses the reaction UMP + ATP = UDP + ADP. It participates in pyrimidine metabolism; CTP biosynthesis via de novo pathway; UDP from UMP (UMPK route): step 1/1. Its activity is regulated as follows. Inhibited by UTP. Functionally, catalyzes the reversible phosphorylation of UMP to UDP. The sequence is that of Uridylate kinase from Chromobacterium violaceum (strain ATCC 12472 / DSM 30191 / JCM 1249 / CCUG 213 / NBRC 12614 / NCIMB 9131 / NCTC 9757 / MK).